A 691-amino-acid chain; its full sequence is MPRQFPLEKTRNIGIMAHIDAGKTTTTERILFYTGKVHKMGEVHEGTATMDWMEQEQERGITITSAATTCEWKGHRINIIDTPGHVDFTVEVERSLRVLDGAIAVFCAKGGVEPQSETVWRQADKYRVPRIAYVNKMDIMGANFFNVIEMMKERLGANPVAIQVPIGKEDTFRGIVDLLTMKAIIYVDDLGKVSQETDIPEEVKDIAEEYRIKLLEAVAETDEEIMVKYLEGEEITVEELKAAIRKATINMQMTPVLCGSSYRNKGVQPLLDAVVDYLPSPVDIAAVKGFSPDTGEEIERKTSEDEPFCALAFKIMSDPYVGKLTFLRVYSGVLHAGSYVYNSTKNKKERVGRLLHMHANHREDVDAVYAGDICAAIGLSNTTTGDTLCDENHPIVLESMEFPEPVIQVAIEPKTKADQEKMGIALQRLAEEDPTFKVSTNHETGQTLIAGMGELHLEIIVDRMRREFKVEVNVGKPQVAYKETIKKSVKVEGKYIRQSGGRGQYGHVWLELEPLERGAGYEFVNKIVGGVIPKEFIPSVDAGVQEAMQSGVLAGYPVVDVRVTLFDGSYHEVDSSDMAFRIAAAQAFREGMKKADPVLLEPIMKVEVVVPEEYMGDVMGDINSRRGRIEGMELRGNAQVIRAYVPLAEMFGYATDLRSKTQGRGTYTMQFDHYEEVPKNIADKILEMKNK.

The tr-type G domain maps to 8–282 (EKTRNIGIMA…AVVDYLPSPV (275 aa)). GTP-binding positions include 17-24 (AHIDAGKT), 81-85 (DTPGH), and 135-138 (NKMD).

This sequence belongs to the TRAFAC class translation factor GTPase superfamily. Classic translation factor GTPase family. EF-G/EF-2 subfamily.

It localises to the cytoplasm. Catalyzes the GTP-dependent ribosomal translocation step during translation elongation. During this step, the ribosome changes from the pre-translocational (PRE) to the post-translocational (POST) state as the newly formed A-site-bound peptidyl-tRNA and P-site-bound deacylated tRNA move to the P and E sites, respectively. Catalyzes the coordinated movement of the two tRNA molecules, the mRNA and conformational changes in the ribosome. This is Elongation factor G from Caldicellulosiruptor bescii (strain ATCC BAA-1888 / DSM 6725 / KCTC 15123 / Z-1320) (Anaerocellum thermophilum).